We begin with the raw amino-acid sequence, 361 residues long: Holliday junction branch migration complex subunit RuvB (361 aa).

Residues methionine 1–tyrosine 181 form a large ATPase domain (RuvB-L) region. ATP is bound by residues leucine 20, arginine 21, glycine 62, lysine 65, threonine 66, threonine 67, glutamate 128–tyrosine 130, arginine 171, tyrosine 181, and arginine 218. Residue threonine 66 coordinates Mg(2+). Residues threonine 182–glutamate 252 are small ATPAse domain (RuvB-S). Residues histidine 255 to glutamate 361 are head domain (RuvB-H). Residues arginine 291, arginine 310, and arginine 315 each contribute to the DNA site.

The protein belongs to the RuvB family. In terms of assembly, homohexamer. Forms an RuvA(8)-RuvB(12)-Holliday junction (HJ) complex. HJ DNA is sandwiched between 2 RuvA tetramers; dsDNA enters through RuvA and exits via RuvB. An RuvB hexamer assembles on each DNA strand where it exits the tetramer. Each RuvB hexamer is contacted by two RuvA subunits (via domain III) on 2 adjacent RuvB subunits; this complex drives branch migration. In the full resolvosome a probable DNA-RuvA(4)-RuvB(12)-RuvC(2) complex forms which resolves the HJ.

Its subcellular location is the cytoplasm. It catalyses the reaction ATP + H2O = ADP + phosphate + H(+). The RuvA-RuvB-RuvC complex processes Holliday junction (HJ) DNA during genetic recombination and DNA repair, while the RuvA-RuvB complex plays an important role in the rescue of blocked DNA replication forks via replication fork reversal (RFR). RuvA specifically binds to HJ cruciform DNA, conferring on it an open structure. The RuvB hexamer acts as an ATP-dependent pump, pulling dsDNA into and through the RuvAB complex. RuvB forms 2 homohexamers on either side of HJ DNA bound by 1 or 2 RuvA tetramers; 4 subunits per hexamer contact DNA at a time. Coordinated motions by a converter formed by DNA-disengaged RuvB subunits stimulates ATP hydrolysis and nucleotide exchange. Immobilization of the converter enables RuvB to convert the ATP-contained energy into a lever motion, pulling 2 nucleotides of DNA out of the RuvA tetramer per ATP hydrolyzed, thus driving DNA branch migration. The RuvB motors rotate together with the DNA substrate, which together with the progressing nucleotide cycle form the mechanistic basis for DNA recombination by continuous HJ branch migration. Branch migration allows RuvC to scan DNA until it finds its consensus sequence, where it cleaves and resolves cruciform DNA. The chain is Holliday junction branch migration complex subunit RuvB from Bartonella quintana (strain Toulouse) (Rochalimaea quintana).